A 384-amino-acid chain; its full sequence is MAQAARLSWVLVSSRCALTEGLLTRPWQPLSAQSRAGFTRVAAGSRGAAVRKGSPRLLGAAALALGGALGLYHTVRWHQRSQDLRAERSAAQLPLSNSLQLTLYQYKTCPFCSKVRAFLDFHSLPYQVVEVNPVRRTEIKFSSYRKVPILVAQEGDSLQQLNDSSVIISALKTYLVSGQPLEEVITYYPPMKAMNDQGKEVTEFCNKYWLMLDEKEAQQMYGGKEARTEEMKWRQWADDWLVHLISPNVYRTPAEALASFDYIVREGKFGAVEAAMAKYVGAAAMYLISKRLKSRHHLQDDVRVDLYEAANKWVTAVGKDRPFMGGQKPNLADLAVYGVLRVMEGLEAFDDLMRHSHIQPWYLRMERAIEEAPSVHHVNPSCKD.

The Lumenal segment spans residues 1-56; the sequence is MAQAARLSWVLVSSRCALTEGLLTRPWQPLSAQSRAGFTRVAAGSRGAAVRKGSPR. A helical membrane pass occupies residues 57-73; that stretch reads LLGAAALALGGALGLYH. The Cytoplasmic portion of the chain corresponds to 74-384; that stretch reads TVRWHQRSQD…VHHVNPSCKD (311 aa). Residues 89–192 form the Glutaredoxin domain; the sequence is SAAQLPLSNS…EVITYYPPMK (104 aa). Glutathione is bound by residues valine 147 and 163-164; that span reads DS. In terms of domain architecture, GST C-terminal spans 262-376; the sequence is YIVREGKFGA…RAIEEAPSVH (115 aa).

This sequence belongs to the GST superfamily. In terms of assembly, homodimer. Interacts with EXOSC10. May interact with CEBPB. Post-translationally, synthesized as a Golgi membrane-associated protein, and the proteolytic removal of the N-terminal hydrophobic domain leads to the formation of a mature cytosolic enzyme. As to expression, widely expressed. Expressed in brain, heart, liver, colon and lung.

Its subcellular location is the golgi apparatus membrane. The protein localises to the nucleus. It is found in the cytoplasm. The enzyme catalyses prostaglandin H2 = prostaglandin E2. The catalysed reaction is prostaglandin H2 = (12S)-hydroxy-(5Z,8E,10E)-heptadecatrienoate + malonaldehyde. The protein operates within lipid metabolism; prostaglandin biosynthesis. Isomerase activity is increased by sulfhydril compounds. Dithiothreitol (DTT) is most effective, followed by glutathione (GSH) and 2-mercaptoethanol. In terms of biological role, isomerase that catalyzes the conversion of PGH2 into the more stable prostaglandin E2 (PGE2) (in vitro). The biological function and the GSH-dependent property of PTGES2 is still under debate. In vivo, PTGES2 could form a complex with GSH and heme and would not participate in PGE2 synthesis but would catalyze the degradation of prostaglandin E2 H2 (PGH2) to 12(S)-hydroxy-5(Z),8(E),10(E)-heptadecatrienoic acid (HHT) and malondialdehyde (MDA). May also have transactivation activity toward IFN-gamma (IFNG), possibly via an interaction with CEBPB; however, the relevance of transcription activation activity remains unclear. The sequence is that of Prostaglandin E synthase 2 (Ptges2) from Mus musculus (Mouse).